The following is a 341-amino-acid chain: S-adenosylmethionine:tRNA ribosyltransferase-isomerase (341 aa).

Belongs to the QueA family. As to quaternary structure, monomer.

Its subcellular location is the cytoplasm. The enzyme catalyses 7-aminomethyl-7-carbaguanosine(34) in tRNA + S-adenosyl-L-methionine = epoxyqueuosine(34) in tRNA + adenine + L-methionine + 2 H(+). It participates in tRNA modification; tRNA-queuosine biosynthesis. Its function is as follows. Transfers and isomerizes the ribose moiety from AdoMet to the 7-aminomethyl group of 7-deazaguanine (preQ1-tRNA) to give epoxyqueuosine (oQ-tRNA). The sequence is that of S-adenosylmethionine:tRNA ribosyltransferase-isomerase from Pelodictyon phaeoclathratiforme (strain DSM 5477 / BU-1).